A 683-amino-acid polypeptide reads, in one-letter code: Heat shock protein homolog ECU03_0520 (683 aa).

It belongs to the heat shock protein 70 family.

It localises to the cytoplasm. This Encephalitozoon cuniculi (strain GB-M1) (Microsporidian parasite) protein is Heat shock protein homolog ECU03_0520.